The sequence spans 81 residues: Putative membrane protein insertion efficiency factor (81 aa).

It belongs to the UPF0161 family.

It localises to the cell inner membrane. Functionally, could be involved in insertion of integral membrane proteins into the membrane. The polypeptide is Putative membrane protein insertion efficiency factor (Legionella pneumophila (strain Lens)).